A 333-amino-acid polypeptide reads, in one-letter code: DNA-directed RNA polymerase subunit alpha (333 aa).

The tract at residues 1–233 (MVREKVKVST…NLFIPFLHVE (233 aa)) is alpha N-terminal domain (alpha-NTD). Positions 267-333 (LVFQYIFIDQ…LEKNRKFISN (67 aa)) are alpha C-terminal domain (alpha-CTD).

The protein belongs to the RNA polymerase alpha chain family. In plastids the minimal PEP RNA polymerase catalytic core is composed of four subunits: alpha, beta, beta', and beta''. When a (nuclear-encoded) sigma factor is associated with the core the holoenzyme is formed, which can initiate transcription.

It is found in the plastid. The protein localises to the chloroplast. The catalysed reaction is RNA(n) + a ribonucleoside 5'-triphosphate = RNA(n+1) + diphosphate. Its function is as follows. DNA-dependent RNA polymerase catalyzes the transcription of DNA into RNA using the four ribonucleoside triphosphates as substrates. The polypeptide is DNA-directed RNA polymerase subunit alpha (Aethionema grandiflorum (Persian stone-cress)).